The primary structure comprises 249 residues: tRNA pseudouridine synthase A (249 aa).

D53 acts as the Nucleophile in catalysis. Y111 is a binding site for substrate.

Belongs to the tRNA pseudouridine synthase TruA family. Homodimer.

It catalyses the reaction uridine(38/39/40) in tRNA = pseudouridine(38/39/40) in tRNA. Functionally, formation of pseudouridine at positions 38, 39 and 40 in the anticodon stem and loop of transfer RNAs. In Streptococcus suis (strain 05ZYH33), this protein is tRNA pseudouridine synthase A.